The primary structure comprises 154 residues: SsrA-binding protein (154 aa).

It belongs to the SmpB family.

It is found in the cytoplasm. In terms of biological role, required for rescue of stalled ribosomes mediated by trans-translation. Binds to transfer-messenger RNA (tmRNA), required for stable association of tmRNA with ribosomes. tmRNA and SmpB together mimic tRNA shape, replacing the anticodon stem-loop with SmpB. tmRNA is encoded by the ssrA gene; the 2 termini fold to resemble tRNA(Ala) and it encodes a 'tag peptide', a short internal open reading frame. During trans-translation Ala-aminoacylated tmRNA acts like a tRNA, entering the A-site of stalled ribosomes, displacing the stalled mRNA. The ribosome then switches to translate the ORF on the tmRNA; the nascent peptide is terminated with the 'tag peptide' encoded by the tmRNA and targeted for degradation. The ribosome is freed to recommence translation, which seems to be the essential function of trans-translation. The sequence is that of SsrA-binding protein from Acetivibrio thermocellus (strain ATCC 27405 / DSM 1237 / JCM 9322 / NBRC 103400 / NCIMB 10682 / NRRL B-4536 / VPI 7372) (Clostridium thermocellum).